The sequence spans 415 residues: Dynein assembly factor with WD repeat domains 1 (415 aa).

WD repeat units follow at residues 90–129 (AHILPLTNVALNKSGSCFITGSYDRTCKLWDTASGEELNT), 132–174 (GHRN…HTFR), 175–214 (GHTAEIVCLSFNPQSTLVATGSMDTTAKLWNIQNGEEVCT), 217–256 (GHSAEIISLSFNTSGDRIITGSFDHTVVVWDADTGGKVNI), 259–298 (GHCAEISSALFNWDCSLILTGSMDKTCMLWDATNGKCVAT), 301–340 (GHDDEILDSCFDYTGKLIATASADGTARIFSAATRKCIAK), 343–384 (GHEG…QVLE), and 386–415 (HTDEIFSCTFNYKGNIVITGSKDNTCRIWR).

It belongs to the WD repeat WDR69 family. Interacts with IFT46.

The protein resides in the cytoplasm. It localises to the cytoskeleton. Its subcellular location is the flagellum basal body. It is found in the flagellum axoneme. Its function is as follows. Required for axonemal dynein assembly and ciliary motility in ciliated organs, including Kupffer's vesicle, during embryogenesis. Facilitates the onset of robust cilia motility during development. The chain is Dynein assembly factor with WD repeat domains 1 (DAW1) from Macaca fascicularis (Crab-eating macaque).